We begin with the raw amino-acid sequence, 711 residues long: Retrovirus-related Pol polyprotein from type-1 retrotransposable element R2 (711 aa).

In terms of domain architecture, Reverse transcriptase spans 45 to 323 (LHLLRGHVPT…QTFRYLGHFF (279 aa)). Positions 444–711 (LFSCPSFDHL…RAVWSRQAGA (268 aa)) are nucleic acid-binding endonuclease.

It catalyses the reaction DNA(n) + a 2'-deoxyribonucleoside 5'-triphosphate = DNA(n+1) + diphosphate. This is Retrovirus-related Pol polyprotein from type-1 retrotransposable element R2 from Popillia japonica (Japanese beetle).